The following is a 725-amino-acid chain: Polyribonucleotide nucleotidyltransferase (725 aa).

2 residues coordinate Mg(2+): aspartate 487 and aspartate 493. A KH domain is found at 554–613; that stretch reads PRIETMQIPTDKIREVIGTGGKVIREIVEKTGAKIDIQDTGVIKIASSDAKAIKAAYNWI. Positions 623–691 constitute an S1 motif domain; it reads GMIYDGTVVK…ERGKIRLSMK (69 aa). Residues 697–725 are disordered; it reads TGEDITEKLKAEREADRNRERQARQSAGE. The segment covering 701–719 has biased composition (basic and acidic residues); the sequence is ITEKLKAEREADRNRERQA.

It belongs to the polyribonucleotide nucleotidyltransferase family. Mg(2+) serves as cofactor.

Its subcellular location is the cytoplasm. It carries out the reaction RNA(n+1) + phosphate = RNA(n) + a ribonucleoside 5'-diphosphate. Involved in mRNA degradation. Catalyzes the phosphorolysis of single-stranded polyribonucleotides processively in the 3'- to 5'-direction. The polypeptide is Polyribonucleotide nucleotidyltransferase (Methylobacterium nodulans (strain LMG 21967 / CNCM I-2342 / ORS 2060)).